We begin with the raw amino-acid sequence, 274 residues long: 3-methyl-2-oxobutanoate hydroxymethyltransferase (274 aa).

Mg(2+) is bound by residues Asp49 and Asp88. 3-methyl-2-oxobutanoate contacts are provided by residues 49–50 (DS), Asp88, and Lys118. A Mg(2+)-binding site is contributed by Glu120. Glu187 functions as the Proton acceptor in the catalytic mechanism.

The protein belongs to the PanB family. In terms of assembly, homodecamer; pentamer of dimers. Mg(2+) serves as cofactor.

It localises to the cytoplasm. The enzyme catalyses 3-methyl-2-oxobutanoate + (6R)-5,10-methylene-5,6,7,8-tetrahydrofolate + H2O = 2-dehydropantoate + (6S)-5,6,7,8-tetrahydrofolate. It participates in cofactor biosynthesis; (R)-pantothenate biosynthesis; (R)-pantoate from 3-methyl-2-oxobutanoate: step 1/2. Catalyzes the reversible reaction in which hydroxymethyl group from 5,10-methylenetetrahydrofolate is transferred onto alpha-ketoisovalerate to form ketopantoate. This is 3-methyl-2-oxobutanoate hydroxymethyltransferase from Allorhizobium ampelinum (strain ATCC BAA-846 / DSM 112012 / S4) (Agrobacterium vitis (strain S4)).